Here is a 497-residue protein sequence, read N- to C-terminus: Delayed-rectifier potassium channel regulatory subunit KCNS1 (497 aa).

Residues 1-186 lie on the Cytoplasmic side of the membrane; the sequence is MVSEFPGPGS…LTMENPGYSL (186 aa). A helical membrane pass occupies residues 187–208; sequence PSKLFSCVSIGVVLASIAAMCI. The Extracellular segment spans residues 209–239; that stretch reads HSLPEYQAREAAAAVAAVAAGRSAEEVRDDP. The chain crosses the membrane as a helical span at residues 240 to 262; that stretch reads VLRRLEYFCIAWFSFEVSSRLLL. At 263 to 273 the chain is on the cytoplasmic side; the sequence is APSTRNFFCHP. The chain crosses the membrane as a helical span at residues 274–291; it reads LNLIDIVSVLPFYLTLLA. Over 292-309 the chain is Extracellular; sequence GAALGDQRGASGEELGDL. A helical; Voltage-sensor transmembrane segment spans residues 310-330; that stretch reads GKVVQVFRLMRIFRVLKLARH. At 331–345 the chain is on the cytoplasmic side; it reads STGLRSLGATLKHSY. The helical transmembrane segment at 346–367 threads the bilayer; it reads REVGILLLYLAVGVSVFSGVAY. Residues 368–379 are Extracellular-facing; that stretch reads TAEEENEGFHTI. An intramembrane region (helical) is located at residues 380–391; it reads PACWWWGTVSMT. The Selectivity filter signature appears at 392–397; sequence TVGYGD. The stretch at 392 to 399 is an intramembrane region; that stretch reads TVGYGDVV. At 400–406 the chain is on the extracellular side; that stretch reads PETVGGK. The helical transmembrane segment at 407-435 threads the bilayer; sequence LAASGCILGGILVVALPITIIFNKFSHFY. The Cytoplasmic segment spans residues 436–497; it reads RRQKALEAAV…PREPAKSHSY (62 aa). The tract at residues 464 to 497 is disordered; that stretch reads SDVSLETSRDTSQEGRSTDLETQAPREPAKSHSY. Residues 470–482 are compositionally biased toward basic and acidic residues; the sequence is TSRDTSQEGRSTD.

The protein belongs to the potassium channel family. S (TC 1.A.1.2) subfamily. Kv9.1/KCNS1 sub-subfamily. In terms of assembly, heterotetramer with KCNB1 and KCNB2. Does not form homomultimers. As to expression, detected in brain, but not in the other tissues tested. The highest levels of expression are in olfactory bulb, cerebral cortex, hippocampus, habenula, basolateral amygdaloid nuclei and cerebellum.

The protein resides in the cell membrane. In terms of biological role, potassium channel regulatory subunit that modulate the delayed rectifier voltage-gated potassium channel activity of KCNB1 and KCNB2 by altering their kinetics, expression levels, and shifting the half-inactivation potential to more polarized values. While it does not form functional channels on its own, it can form functional heterotetrameric channels with KCNB1 and KCNB2. Each regulatory subunit has unique regulatory properties that can lead to extensive inhibition, significant changes in kinetics, and/or substantial shifts in the voltage dependencies of the inactivation process. This Mus musculus (Mouse) protein is Delayed-rectifier potassium channel regulatory subunit KCNS1.